A 507-amino-acid chain; its full sequence is Maturase K (507 aa).

The protein belongs to the intron maturase 2 family. MatK subfamily.

The protein localises to the plastid. Its subcellular location is the chloroplast. Usually encoded in the trnK tRNA gene intron. Probably assists in splicing its own and other chloroplast group II introns. The sequence is that of Maturase K from Buxus microphylla (Littleleaf boxwood).